Here is a 309-residue protein sequence, read N- to C-terminus: MILTVTMNPSIDISYPLDELKIDTVNRVVDVTKTAGGKGLNVTRVLSEFGDSVLATGLVGGKLGEFLVEHIDNQVKKDFFSIQGETRNCIAILHGDNQTEVLEKGPEVLEQEGQDFLEHFKKLLESVEVVAISGSLPAGLPVDYCASLVELANQAGKPVVLDCSGAALQAVLESPHKPTVIKPNNEELSQLLGREVSEDLDELKEVLQEPLFAGIEWIIVSLGANGTFTKHGDTFYKVDIPRIQAVNPVGSGDSTVAGISSGLLHKESDAELLIKANVLGMLNAQEKMTGHVNMANYQALYDQLIVKEV.

The protein belongs to the carbohydrate kinase PfkB family. LacC subfamily.

The catalysed reaction is D-tagatofuranose 6-phosphate + ATP = D-tagatofuranose 1,6-bisphosphate + ADP + H(+). The protein operates within carbohydrate metabolism; D-tagatose 6-phosphate degradation; D-glyceraldehyde 3-phosphate and glycerone phosphate from D-tagatose 6-phosphate: step 1/2. This chain is Tagatose-6-phosphate kinase, found in Streptococcus pneumoniae (strain P1031).